Reading from the N-terminus, the 1174-residue chain is PR domain zinc finger protein 15 (1174 aa).

In terms of domain architecture, SET spans 75 to 185; sequence SNLEIRRLDD…AGTELRVWYA (111 aa). The segment at 252-307 is disordered; it reads LPAGGQQHEAASEKEPDAPRMEPPTAAESKSIQSVMVTKEPKKKPRRGRKPKASKV. The segment covering 261 to 271 has biased composition (basic and acidic residues); that stretch reads AASEKEPDAPR. The segment covering 292-304 has biased composition (basic residues); that stretch reads PKKKPRRGRKPKA. 2 consecutive C2H2-type zinc fingers follow at residues 402–424 and 434–457; these read HQCG…VRSH and FKCE…SYKH. Residues 468-486 form a C2H2-type 3; degenerate zinc finger; the sequence is YRCGSCGKTFRMESALEFH. 2 C2H2-type zinc fingers span residues 495–517 and 522–544; these read FQCE…KKKH and FACE…QRRH. A Glycyl lysine isopeptide (Lys-Gly) (interchain with G-Cter in SUMO2) cross-link involves residue Lys-552. C2H2-type zinc fingers lie at residues 571-593 and 598-620; these read SGCP…LLTH and YTCE…IHVH. The interval 639–658 is disordered; sequence IGISSEENDDNSDESADSEP. Positions 644–655 are enriched in acidic residues; it reads EENDDNSDESAD. 8 consecutive C2H2-type zinc fingers follow at residues 661–684, 689–711, 725–747, 753–775, 781–803, 809–831, 837–859, and 865–888; these read YSCK…MEVH, HGCS…MVIH, HPCE…KLIH, HACE…MRVH, YLCA…MKLH, YECK…YKRH, FMCE…KLIH, and WTCS…QLTH. Disordered regions lie at residues 957-1007 and 1147-1174; these read AEGK…GDET and LQPP…MYSY. The segment covering 962 to 973 has biased composition (basic residues); it reads GKAAKRSHKRKQ. Positions 1154–1174 are enriched in low complexity; that stretch reads AAPQQAVQPQVQNEQQQMYSY.

As to expression, expressed in embryonic stem cells (ESCs) (at protein level).

The protein resides in the nucleus. Its function is as follows. Sequence-specific DNA-binding transcriptional regulator. Plays a role as a molecular node in a transcriptional network regulating embryonic development and cell fate decision. Stimulates the expression of upstream key transcriptional activators and repressors of the Wnt/beta-catenin and MAPK/ERK pathways, respectively, that are essential for naive pluripotency and self-renewal maintenance of embryonic stem cells (ESCs). Specifically promotes SPRY1 and RSPO1 transcription activation through recognition and direct binding of a specific DNA sequence in their promoter regions. Also plays a role in induced pluripotent stem cells (iPSCs) reprogramming. Involved in early embryo development. The sequence is that of PR domain zinc finger protein 15 from Mus musculus (Mouse).